The chain runs to 340 residues: Glycerol-3-phosphate dehydrogenase [NAD(P)+] (340 aa).

NADPH is bound by residues Ser11, Trp12, Arg33, and Lys106. The sn-glycerol 3-phosphate site is built by Lys106, Gly137, and Ser139. Ala141 provides a ligand contact to NADPH. Residues Lys192, Asp245, Ser255, Arg256, and Asn257 each contribute to the sn-glycerol 3-phosphate site. The Proton acceptor role is filled by Lys192. An NADPH-binding site is contributed by Arg256. The NADPH site is built by Val280 and Glu282.

This sequence belongs to the NAD-dependent glycerol-3-phosphate dehydrogenase family.

The protein resides in the cytoplasm. The catalysed reaction is sn-glycerol 3-phosphate + NAD(+) = dihydroxyacetone phosphate + NADH + H(+). It catalyses the reaction sn-glycerol 3-phosphate + NADP(+) = dihydroxyacetone phosphate + NADPH + H(+). The protein operates within membrane lipid metabolism; glycerophospholipid metabolism. Functionally, catalyzes the reduction of the glycolytic intermediate dihydroxyacetone phosphate (DHAP) to sn-glycerol 3-phosphate (G3P), the key precursor for phospholipid synthesis. The sequence is that of Glycerol-3-phosphate dehydrogenase [NAD(P)+] from Bacillus cereus (strain 03BB102).